The following is an 88-amino-acid chain: Small ribosomal subunit protein bS20 (88 aa).

Residues 1 to 22 (MANTPSAKKAVNKIAKRTQVNK) are disordered.

It belongs to the bacterial ribosomal protein bS20 family.

Binds directly to 16S ribosomal RNA. The polypeptide is Small ribosomal subunit protein bS20 (Bartonella bacilliformis (strain ATCC 35685 / KC583 / Herrer 020/F12,63)).